A 423-amino-acid polypeptide reads, in one-letter code: UDP-N-acetylglucosamine 1-carboxyvinyltransferase 2 (423 aa).

23-24 serves as a coordination point for phosphoenolpyruvate; it reads KN. Arg-96 is a UDP-N-acetyl-alpha-D-glucosamine binding site. The active-site Proton donor is Cys-120. Cys-120 is subject to 2-(S-cysteinyl)pyruvic acid O-phosphothioketal. UDP-N-acetyl-alpha-D-glucosamine is bound by residues 125 to 129, Asp-309, and Val-331; that span reads RPIDL.

It belongs to the EPSP synthase family. MurA subfamily.

The protein resides in the cytoplasm. It carries out the reaction phosphoenolpyruvate + UDP-N-acetyl-alpha-D-glucosamine = UDP-N-acetyl-3-O-(1-carboxyvinyl)-alpha-D-glucosamine + phosphate. Its pathway is cell wall biogenesis; peptidoglycan biosynthesis. Cell wall formation. Adds enolpyruvyl to UDP-N-acetylglucosamine. The polypeptide is UDP-N-acetylglucosamine 1-carboxyvinyltransferase 2 (Streptococcus agalactiae serotype III (strain NEM316)).